A 479-amino-acid chain; its full sequence is Ribosomal RNA small subunit methyltransferase F (479 aa).

S-adenosyl-L-methionine-binding positions include 125 to 131 (AAAPGSK), Glu-149, Asp-176, and Asp-194. Cys-247 functions as the Nucleophile in the catalytic mechanism.

It belongs to the class I-like SAM-binding methyltransferase superfamily. RsmB/NOP family.

The protein resides in the cytoplasm. It catalyses the reaction cytidine(1407) in 16S rRNA + S-adenosyl-L-methionine = 5-methylcytidine(1407) in 16S rRNA + S-adenosyl-L-homocysteine + H(+). Functionally, specifically methylates the cytosine at position 1407 (m5C1407) of 16S rRNA. The polypeptide is Ribosomal RNA small subunit methyltransferase F (Shigella sonnei (strain Ss046)).